A 173-amino-acid chain; its full sequence is Membrane-bound hydrogenase subunit beta (173 aa).

The protein belongs to the complex I 30 kDa subunit family. As to quaternary structure, the membrane-bound hydrogenase complex is composed of MbhK and MbhL, and may also contain MbhJ. The cofactor is Ni(2+).

The protein localises to the cell membrane. The catalysed reaction is H2 + 2 oxidized [2Fe-2S]-[ferredoxin] = 2 reduced [2Fe-2S]-[ferredoxin] + 2 H(+). Its activity is regulated as follows. Inhibited by 0.1 mM Cu(2+). In terms of biological role, beta subunit of a hydrogen-evolving hydrogenase that utilizes protons both as a substrate for hydrogen production and proton translocation. Acts by coupling the redox reaction via ferredoxin and iron-sulfur (Fe-S) clusters to proton translocation across the membrane thereby conserving the redox energy in a proton gradient. This chain is Membrane-bound hydrogenase subunit beta, found in Pyrococcus furiosus (strain ATCC 43587 / DSM 3638 / JCM 8422 / Vc1).